Here is a 166-residue protein sequence, read N- to C-terminus: 6,7-dimethyl-8-ribityllumazine synthase (166 aa).

5-amino-6-(D-ribitylamino)uracil-binding positions include phenylalanine 24, 58–60, and 82–84; these read ALE and AVI. 87–88 serves as a coordination point for (2S)-2-hydroxy-3-oxobutyl phosphate; sequence ET. Catalysis depends on histidine 90, which acts as the Proton donor. Asparagine 115 lines the 5-amino-6-(D-ribitylamino)uracil pocket. Arginine 129 contributes to the (2S)-2-hydroxy-3-oxobutyl phosphate binding site.

It belongs to the DMRL synthase family.

It carries out the reaction (2S)-2-hydroxy-3-oxobutyl phosphate + 5-amino-6-(D-ribitylamino)uracil = 6,7-dimethyl-8-(1-D-ribityl)lumazine + phosphate + 2 H2O + H(+). Its pathway is cofactor biosynthesis; riboflavin biosynthesis; riboflavin from 2-hydroxy-3-oxobutyl phosphate and 5-amino-6-(D-ribitylamino)uracil: step 1/2. Functionally, catalyzes the formation of 6,7-dimethyl-8-ribityllumazine by condensation of 5-amino-6-(D-ribitylamino)uracil with 3,4-dihydroxy-2-butanone 4-phosphate. This is the penultimate step in the biosynthesis of riboflavin. This chain is 6,7-dimethyl-8-ribityllumazine synthase, found in Ralstonia pickettii (strain 12J).